The chain runs to 458 residues: Phosphoglucosamine mutase (458 aa).

Serine 109 acts as the Phosphoserine intermediate in catalysis. The Mg(2+) site is built by serine 109, aspartate 251, aspartate 253, and aspartate 255. Serine 109 is modified (phosphoserine).

This sequence belongs to the phosphohexose mutase family. Requires Mg(2+) as cofactor. Post-translationally, activated by phosphorylation.

The enzyme catalyses alpha-D-glucosamine 1-phosphate = D-glucosamine 6-phosphate. Functionally, catalyzes the conversion of glucosamine-6-phosphate to glucosamine-1-phosphate. This Myxococcus xanthus (strain DK1622) protein is Phosphoglucosamine mutase.